The sequence spans 539 residues: MLGQMMYQPLLISSLIDHAARYHGEAQIWSVSTEGGVEETNWAGIADNARRLGSVLTDAGLAPQSRVATLAWNNRRHLEIYYGVSGAGFVLHTINPRLFPEQLVYILNHAEDRILFFDATFLPLVEGIRPHLTTVERLVLMGPRDEAAAARIEGLEFYDEFVATGDAGFDWPDLDERTASSLCYTSGTTGNPKGVLYSHRSTVLHSFGSNTRDCIGFSARDVVMPVVPMFHVNAWGTPYACAMSGSCMVLPGPDLHGEALVGLIDRYRVTIALGVPTIWQGLLATARAKGSTLESLTRTVIGGAACPPSMIAEFRDRYGVDTVHAWGMSEMSPLGTTNQPLAKHGALPIEAQHKLRENQGRPPYGVELKIVDDDGNTLPNDGQTQGDLMVRGHWVLDSYFQLQDQPILSDGWFATGDVATLDRDGYMTIRDRSKDIIKSGGEWISSVELENIAVAHPKLATAAVIGVPHPKWDERPLLVAVKAEGETPDEAELLAFFDGKIAKWQVPDRVVFVEALPLNATGKVLKRTLREQFRDVLTG.

Residue Thr185 coordinates Mg(2+). Positions 231, 303, 324, 325, and 329 each coordinate ATP. Glu330 serves as a coordination point for Mg(2+). Residues Gln359, Asp417, Arg432, and Lys523 each contribute to the ATP site.

This sequence belongs to the ATP-dependent AMP-binding enzyme family. In terms of assembly, homodimer. Mg(2+) is required as a cofactor.

It carries out the reaction 3-(methylsulfanyl)propanoate + ATP + CoA = 3-(methylsulfanyl)propanoyl-CoA + AMP + diphosphate. It participates in lipid metabolism; fatty acid metabolism. With respect to regulation, activated by LiCl and NH(4)Cl. Inhibited by dimethylsulfoniopropionate (DMSP). MMPA concentrations above 2 mM relieve the DMSP inhibition and 80% of activity is regained at an MMPA concentration of 8 mM. Involved in the assimilation of dimethylsulphoniopropionate (DMSP), an important compound in the fixation of carbon in marine phytoplankton. Catalyzes the ATP-dependent ligation of methylmercaptopropionate (MMPA) and CoA to yield methylmercaptopropionate-CoA (MMPA-CoA). It is also active with short-chain-fatty-acid (carboxylic acids up to six carbons in length). This chain is 3-methylmercaptopropionyl-CoA ligase, found in Ruegeria pomeroyi (strain ATCC 700808 / DSM 15171 / DSS-3) (Silicibacter pomeroyi).